The sequence spans 481 residues: 2-succinylbenzoate--CoA ligase (481 aa).

The protein belongs to the ATP-dependent AMP-binding enzyme family. MenE subfamily.

It carries out the reaction 2-succinylbenzoate + ATP + CoA = 2-succinylbenzoyl-CoA + AMP + diphosphate. The protein operates within quinol/quinone metabolism; 1,4-dihydroxy-2-naphthoate biosynthesis; 1,4-dihydroxy-2-naphthoate from chorismate: step 5/7. It functions in the pathway quinol/quinone metabolism; menaquinone biosynthesis. Converts 2-succinylbenzoate (OSB) to 2-succinylbenzoyl-CoA (OSB-CoA). This chain is 2-succinylbenzoate--CoA ligase, found in Bacillus cereus (strain ATCC 10987 / NRS 248).